The primary structure comprises 426 residues: D-tagatose-1,6-bisphosphate aldolase subunit KbaZ (426 aa).

This sequence belongs to the GatZ/KbaZ family. KbaZ subfamily. As to quaternary structure, forms a complex with KbaY.

The protein operates within carbohydrate metabolism; D-tagatose 6-phosphate degradation; D-glyceraldehyde 3-phosphate and glycerone phosphate from D-tagatose 6-phosphate: step 2/2. In terms of biological role, component of the tagatose-1,6-bisphosphate aldolase KbaYZ that is required for full activity and stability of the Y subunit. Could have a chaperone-like function for the proper and stable folding of KbaY. When expressed alone, KbaZ does not show any aldolase activity. In Escherichia coli (strain SMS-3-5 / SECEC), this protein is D-tagatose-1,6-bisphosphate aldolase subunit KbaZ.